We begin with the raw amino-acid sequence, 504 residues long: Maturase K (504 aa).

The protein belongs to the intron maturase 2 family. MatK subfamily.

It is found in the plastid. The protein localises to the chloroplast. In terms of biological role, usually encoded in the trnK tRNA gene intron. Probably assists in splicing its own and other chloroplast group II introns. This Prionotes cerinthoides (Climbing heath) protein is Maturase K.